A 151-amino-acid polypeptide reads, in one-letter code: UPF0208 membrane protein NT01EI_2692 (151 aa).

The next 2 membrane-spanning stretches (helical) occupy residues 46–65 (FAIR…QIAL) and 69–91 (LGPA…WWLG).

This sequence belongs to the UPF0208 family.

It is found in the cell inner membrane. In Edwardsiella ictaluri (strain 93-146), this protein is UPF0208 membrane protein NT01EI_2692.